We begin with the raw amino-acid sequence, 394 residues long: 3-hydroxybenzoate 6-hydroxylase 1 (394 aa).

This sequence belongs to the 3-hydroxybenzoate 6-hydroxylase family. In terms of assembly, homotrimer. The cofactor is FAD.

It carries out the reaction 3-hydroxybenzoate + NADH + O2 + H(+) = 2,5-dihydroxybenzoate + NAD(+) + H2O. Its activity is regulated as follows. Inhibited by manganese, copper, mercury, and iron ions. In terms of biological role, catalyzes the NAD- or NADP-dependent conversion of 3-hydroxybenzoate to gentisate. The affinity of the enzyme toward NAD is twice as high as for NADP. The enzyme shows higher specific activities against the intermediates in the degradation of 2,5-xylenol and 3,5-xylenol, 3-hydroxy-4-methylbenzoate and 3-hydroxy-5-methylbenzoate, respectively, than for 3-hydroxybenzoate. It also shows activity against 3-substituted benzoates. The sequence is that of 3-hydroxybenzoate 6-hydroxylase 1 (xlnD) from Aquipseudomonas alcaligenes (Pseudomonas alcaligenes).